Consider the following 853-residue polypeptide: Lysine-specific histone demethylase 1A (853 aa).

The disordered stretch occupies residues 1–177 (MLSGKKAAAA…EPEEPSGVEG (177 aa)). A compositionally biased stretch (low complexity) spans 7–26 (AAAAAAAAAAAAAAGTEAGS). Thr60 is subject to Phosphothreonine. Positions 76–97 (AEPPGSAGPQAGPTAGPGSATP) are enriched in low complexity. Thr105 carries the post-translational modification Phosphothreonine. Residues 111–152 (TSRRKRAKVEYREMDESLANLSEDEYYSEEERNAKAEKEKKL) adopt a coiled-coil conformation. Phosphoserine is present on residues Ser127 and Ser132. Tyr136 bears the Phosphotyrosine mark. Residue Ser138 is modified to Phosphoserine. Residues 139 to 152 (EEERNAKAEKEKKL) are compositionally biased toward basic and acidic residues. Residues 161–173 (PEEENESEPEEPS) show a composition bias toward acidic residues. Phosphoserine is present on Ser167. One can recognise an SWIRM domain in the interval 175-274 (VEGAAFQSRL…FGIYKRIKPL (100 aa)). FAD contacts are provided by residues Ser290, Glu309, Arg311, Arg317, and 333–334 (MV). The tract at residues 301–853 (FGMDVTLLEA…GVPAQQSPSM (553 aa)) is demethylase activity. Positions 429–515 (IEHWKKIVKT…EEKLQELEAN (87 aa)) form a coiled coil. 3 positions are modified to N6-acetyllysine: Lys433, Lys434, and Lys437. Residues Lys443 and Lys470 each participate in a glycyl lysine isopeptide (Lys-Gly) (interchain with G-Cter in SUMO2) cross-link. Residue Lys504 forms a Glycyl lysine isopeptide (Lys-Gly) (interchain with G-Cter in ubiquitin) linkage. Ser612 is subject to Phosphoserine. Residues Glu802 and 811–812 (TV) each bind FAD. Residue Ser850 is modified to Phosphoserine.

It belongs to the flavin monoamine oxidase family. In terms of assembly, component of a histone demethylase complex with RCOR1. Component of a BHC histone deacetylase complex that contains HDAC1, HDAC2, HMG20B, KDM1A, RCOR1 and PHF21A. The BHC complex may also contain ZMYM2, ZNF217, ZMYM3, GSE1 and GTF2I. In the complex, RCOR1 strongly enhances the demethylase activity and protects it from the proteasome while PHF21A inhibits the demethylase activity. Interacts with the androgen receptor (AR). Component of a RCOR/GFI/KDM1A/HDAC complex. Interacts directly with GFI1 and GFI1B. Interacts with SNAI1 (via SNAG domain). Interacts with INSM1. Interacts (via AOD/Tower domain) with JADE2 (via C-terminus). Interacts with ESRRB; co-occupes the core set of ESRRB targets. Interacts with SAMD1 (via WH domain); the interaction modulates KDM1A function. Interacts with RBPJ. Interacts with L3MBTL3. Interacts with ZMYND8. The cofactor is FAD. Acetylated by KAT8 in epithelial but not in mesenchymal cells, thereby regulating the epithelial-to-mesenchymal transition. Acetylation by KAT8 reduces KDM1A association with nucleosomes, thereby decreasing histone H3 demethylation, leading to transcription activatio of target genes. Post-translationally, polyubiquitinated by JADE2; which leads to its proteasomal degradation. Deubiquitinated by USP38; preventing it from degradation by the 26S proteasome. Ubiquitously expressed.

The protein localises to the nucleus. It is found in the chromosome. The enzyme catalyses N(6),N(6)-dimethyl-L-lysyl(4)-[histone H3] + 2 A + 2 H2O = L-lysyl(4)-[histone H3] + 2 formaldehyde + 2 AH2. With respect to regulation, the N-terminal sequences of INSM1 and SNAI1 compete with histone H3 for the same binding site and thereby inhibit histone demethylation (in vitro). Functionally, histone demethylase that can demethylate both 'Lys-4' (H3K4me) and 'Lys-9' (H3K9me) of histone H3, thereby acting as a coactivator or a corepressor, depending on the context. Acts by oxidizing the substrate by FAD to generate the corresponding imine that is subsequently hydrolyzed. Acts as a corepressor by mediating demethylation of H3K4me, a specific tag for epigenetic transcriptional activation. Demethylates both mono- (H3K4me1) and di-methylated (H3K4me2) H3K4me. May play a role in the repression of neuronal genes. Alone, it is unable to demethylate H3K4me on nucleosomes and requires the presence of RCOR1/CoREST to achieve such activity. Also acts as a coactivator of androgen receptor (ANDR)-dependent transcription, by being recruited to ANDR target genes and mediating demethylation of H3K9me, a specific tag for epigenetic transcriptional repression. The presence of PRKCB in ANDR-containing complexes, which mediates phosphorylation of 'Thr-6' of histone H3 (H3T6ph), a specific tag that prevents demethylation H3K4me, prevents H3K4me demethylase activity of KDM1A. Demethylates di-methylated 'Lys-370' of p53/TP53 which prevents interaction of p53/TP53 with TP53BP1 and represses p53/TP53-mediated transcriptional activation. Demethylates and stabilizes the DNA methylase DNMT1. Demethylates methylated 'Lys-44' and methylated 'Lys-119' of SOX2. Required for gastrulation during embryogenesis. Component of a RCOR/GFI/KDM1A/HDAC complex that suppresses, via histone deacetylase (HDAC) recruitment, a number of genes implicated in multilineage blood cell development. Facilitates epithelial-to-mesenchymal transition by acting as an effector of SNAI1-mediated transcription repression of epithelial markers E-cadherin/CDH1, CDN7 and KRT8. Required for the maintenance of the silenced state of the SNAI1 target genes E-cadherin/CDH1 and CDN7. Required for the repression of GIPR expression. The protein is Lysine-specific histone demethylase 1A of Mus musculus (Mouse).